Consider the following 182-residue polypeptide: Protein Syd (182 aa).

The protein belongs to the Syd family.

It is found in the cell inner membrane. Its function is as follows. Interacts with the SecY protein in vivo. May bind preferentially to an uncomplexed state of SecY, thus functioning either as a chelating agent for excess SecY in the cell or as a regulatory factor that negatively controls the translocase function. This Aeromonas hydrophila subsp. hydrophila (strain ATCC 7966 / DSM 30187 / BCRC 13018 / CCUG 14551 / JCM 1027 / KCTC 2358 / NCIMB 9240 / NCTC 8049) protein is Protein Syd.